Consider the following 444-residue polypeptide: MKHFSVKRLLGLSSVLLVTLGASMHAQSYLPKHESVTLKNGLQVVSVPLENKTGVIEVDVLYKVGSRNETMGKSGIAHMLEHLNFKSTKNLKAGEFDKIVKRFGGVSNASTSFDITRYFIKTSQANLDKSLELFAETMGSLNLKEDEFLPERQVVAEERRWRTDNSPIGMLYFRFFNTAYVYHPYHWTPIGFMDDIQNWTLKDIKKFHSLYYQPKNAIVLVVGDVNSQKVFELSKKHFESLKNLDEKAIPTPYMKEPKQDGARTAVVHKDGVHLEWVALGYKVPAFKHKDQVALDALSRLLGEGKSSWLQSELVDKKRLASQAFSHNMQLQDESVFLFIAGGNPNVKAEALQKEIVALLEKLKKGEITQAELDKLKINQKADFISNLESSSDVAGLFADYLVQNDIQGLTDYQRQFLDLKVSDLVRVANEYFKDTQSTTVFLKP.

The signal sequence occupies residues 1–28; sequence MKHFSVKRLLGLSSVLLVTLGASMHAQS. His-78 is a binding site for Zn(2+). Glu-81 serves as the catalytic Proton acceptor. Residues His-82 and Glu-158 each contribute to the Zn(2+) site.

It belongs to the peptidase M16 family. Zn(2+) serves as cofactor.

The protein localises to the secreted. Can function alone, but full activity requires the presence of the non-peptidase homolog YmxG. Virulence factor that cleaves the cytoplasmic domain of the human junctional adhesion molecule A (JAM-A), compromising gastric epithelial barrier function and cell-cell adhesion. Cleavage of JAM-A occurs after Ala-285 or, to a lesser extent, before Ala-285. The protein is Zinc protease PqqE of Helicobacter pylori (strain ATCC 700392 / 26695) (Campylobacter pylori).